The following is a 294-amino-acid chain: Very long chain fatty acid elongase 5 (294 aa).

7 consecutive transmembrane segments (helical) span residues 26–46, 64–84, 112–132, 141–161, 172–192, 207–227, and 231–251; these read WLLL…LLIV, ILVV…YELV, VLWW…FFIL, FLHI…MNWV, FNSF…IPAI, LVQF…PCGF, and WLYF…NFYI. A disordered region spans residues 261-294; that stretch reads AKKDPRHNGIKSVNGHSNGASHTNAVKNRKARTD. Polar residues predominate over residues 274–286; it reads NGHSNGASHTNAV.

This sequence belongs to the ELO family. ELOVL5 subfamily. As to expression, expression is highest in intestine, followed by brain and heart, and lowest in gill. Also expressed in liver, spleen and muscle.

The protein localises to the endoplasmic reticulum membrane. It localises to the cell projection. It is found in the dendrite. The enzyme catalyses a very-long-chain acyl-CoA + malonyl-CoA + H(+) = a very-long-chain 3-oxoacyl-CoA + CO2 + CoA. The catalysed reaction is (6Z,9Z,12Z)-octadecatrienoyl-CoA + malonyl-CoA + H(+) = (8Z,11Z,14Z)-3-oxoeicosatrienoyl-CoA + CO2 + CoA. It catalyses the reaction (9Z,12Z,15Z)-octadecatrienoyl-CoA + malonyl-CoA + H(+) = (11Z,14Z,17Z)-3-oxoeicosatrienoyl-CoA + CO2 + CoA. It carries out the reaction (9Z)-hexadecenoyl-CoA + malonyl-CoA + H(+) = 3-oxo-(11Z)-octadecenoyl-CoA + CO2 + CoA. The enzyme catalyses (9Z)-octadecenoyl-CoA + malonyl-CoA + H(+) = 3-oxo-(11Z)-eicosenoyl-CoA + CO2 + CoA. The catalysed reaction is (11Z)-octadecenoyl-CoA + malonyl-CoA + H(+) = 3-oxo-(13Z)-eicosenoyl-CoA + CO2 + CoA. It catalyses the reaction (9Z,12Z)-octadecadienoyl-CoA + malonyl-CoA + H(+) = (11Z,14Z)-3-oxoicosa-11,14-dienoyl-CoA + CO2 + CoA. It carries out the reaction (6Z,9Z,12Z,15Z)-octadecatetraenoyl-CoA + malonyl-CoA + H(+) = (8Z,11Z,14Z,17Z)-3-oxoicosatetraenoyl-CoA + CO2 + CoA. The enzyme catalyses (5Z,8Z,11Z,14Z)-eicosatetraenoyl-CoA + malonyl-CoA + H(+) = (7Z,10Z,13Z,16Z)-3-oxodocosatetraenoyl-CoA + CO2 + CoA. The catalysed reaction is (5Z,8Z,11Z,14Z,17Z)-eicosapentaenoyl-CoA + malonyl-CoA + H(+) = 3-oxo-(7Z,10Z,13Z,16Z,19Z)-docosapentaenoyl-CoA + CO2 + CoA. It participates in lipid metabolism; polyunsaturated fatty acid biosynthesis. Its function is as follows. Catalyzes the first and rate-limiting reaction of the four reactions that constitute the long-chain fatty acids elongation cycle. This endoplasmic reticulum-bound enzymatic process allows the addition of 2 carbons to the chain of long- and very long-chain fatty acids (VLCFAs) per cycle. Condensing enzyme that acts specifically toward polyunsaturated acyl-CoA with the higher activity toward C18:3(n-6) acyl-CoA. May participate in the production of monounsaturated and of polyunsaturated VLCFAs of different chain lengths that are involved in multiple biological processes as precursors of membrane lipids and lipid mediators. In conditions where the essential linoleic and alpha linoleic fatty acids are lacking it is also involved in the synthesis of Mead acid from oleic acid. This chain is Very long chain fatty acid elongase 5, found in Tachysurus fulvidraco (Yellow catfish).